Here is a 729-residue protein sequence, read N- to C-terminus: Catalase-peroxidase (729 aa).

The tract at residues 1 to 20 (MHNGSNGSVEQRDSMPETSR) is disordered. The span at 10–20 (EQRDSMPETSR) shows a compositional bias: basic and acidic residues. The tryptophyl-tyrosyl-methioninium (Trp-Tyr) (with M-240) cross-link spans 91 to 214 (WHAAGTYRTT…LGATVMGLIY (124 aa)). His-92 (proton acceptor) is an active-site residue. A cross-link (tryptophyl-tyrosyl-methioninium (Tyr-Met) (with W-91)) is located at residues 214 to 240 (YVNPEGPESTPDPEWSAQRIRKSFGRM). His-255 contributes to the heme b binding site.

It belongs to the peroxidase family. Peroxidase/catalase subfamily. In terms of assembly, homodimer or homotetramer. Requires heme b as cofactor. In terms of processing, formation of the three residue Trp-Tyr-Met cross-link is important for the catalase, but not the peroxidase activity of the enzyme.

It catalyses the reaction H2O2 + AH2 = A + 2 H2O. The catalysed reaction is 2 H2O2 = O2 + 2 H2O. Bifunctional enzyme with both catalase and broad-spectrum peroxidase activity. This is Catalase-peroxidase from Salinibacter ruber (strain DSM 13855 / M31).